Consider the following 181-residue polypeptide: Large ribosomal subunit protein uL6 (181 aa).

Belongs to the universal ribosomal protein uL6 family. Part of the 50S ribosomal subunit.

Its function is as follows. This protein binds to the 23S rRNA, and is important in its secondary structure. It is located near the subunit interface in the base of the L7/L12 stalk, and near the tRNA binding site of the peptidyltransferase center. The sequence is that of Large ribosomal subunit protein uL6 from Flavobacterium psychrophilum (strain ATCC 49511 / DSM 21280 / CIP 103535 / JIP02/86).